The primary structure comprises 547 residues: Agglutinin-1 (547 aa).

Residues Met-1 to Phe-20 form the signal peptide. The residue at position 21 (Gln-21) is a Pyrrolidone carboxylic acid. Residue Glu-183 is part of the active site. 3 disulfides stabilise this stretch: Cys-266–Cys-288, Cys-305–Cys-324, and Cys-348–Cys-365. A propeptide spans Arg-279 to Ser-280 (linker peptide). In terms of domain architecture, Ricin B-type lectin 1 spans Tyr-292 to Gly-419. The 1-alpha repeat unit spans residues Asp-302 to Ser-344. The 1-beta repeat unit spans residues Lys-345–Asn-385. 2 N-linked (GlcNAc...) asparagine glycosylation sites follow: Asn-380 and Asn-420. One copy of the 1-gamma repeat lies at Ser-388–Asn-420. Residues Thr-422 to Leu-546 form the Ricin B-type lectin 2 domain. One copy of the 2-alpha repeat lies at Phe-433–Pro-468. 2 cysteine pairs are disulfide-bonded: Cys-436–Cys-449 and Cys-475–Cys-492. A 2-beta repeat occupies Thr-472–Asn-511. The stretch at Asp-514 to Phe-547 is one 2-gamma repeat.

The protein in the N-terminal section; belongs to the ribosome-inactivating protein family. Type 2 RIP subfamily. Heterotetramer of two A and two B chains.

It catalyses the reaction Endohydrolysis of the N-glycosidic bond at one specific adenosine on the 28S rRNA.. Functionally, the A chain is responsible for inhibiting protein synthesis through the catalytic inactivation of 60S ribosomal subunits by removing adenine from position 4,324 of 28S rRNA. Less toxic than abrin-a. Its function is as follows. The B chain is a galactose-specific lectin that facilitates the binding to the cell membrane that precedes endocytosis. The protein is Agglutinin-1 of Abrus precatorius (Indian licorice).